Consider the following 167-residue polypeptide: Ubiquitin-fold modifier-conjugating enzyme 1 (167 aa).

Cys-116 (glycyl thioester intermediate) is an active-site residue. Lys-122 is covalently cross-linked (Glycyl lysine isopeptide (Lys-Gly) (interchain with G-Cter in UFM1)).

This sequence belongs to the ubiquitin-conjugating enzyme family. UFC1 subfamily. As to quaternary structure, interacts with UBA5 (via C-terminus). Interacts with UFL1. Interacts with UFM1. Interacts with KIRREL3. In terms of processing, ufmylated at Lys-122. Deufmylated by UFSP1.

Functionally, E2-like enzyme which specifically catalyzes the second step in ufmylation. Accepts the ubiquitin-like modifier UFM1 from the E1 enzyme UBA5 and forms an intermediate with UFM1 via a thioester linkage. Ufmylation is involved in various processes, such as ribosome recycling, response to DNA damage, interferon response or reticulophagy (also called ER-phagy). This is Ubiquitin-fold modifier-conjugating enzyme 1 from Bos taurus (Bovine).